The chain runs to 351 residues: Probable aldo-keto reductase 2 (351 aa).

Y67 acts as the Proton donor in catalysis. H134 lines the substrate pocket. Residue S213 to G223 participates in NADP(+) binding. The disordered stretch occupies residues Y317–Q351. Residues M332 to Q351 are compositionally biased toward polar residues.

This sequence belongs to the aldo/keto reductase family.

In Oryza sativa subsp. indica (Rice), this protein is Probable aldo-keto reductase 2.